A 226-amino-acid polypeptide reads, in one-letter code: Cold-regulated 413 inner membrane protein 2, chloroplastic (226 aa).

A chloroplast-targeting transit peptide spans 1–76; that stretch reads MASLCLSSSR…RKRGSSVVCY (76 aa). Over 77–79 the chain is Stromal; that stretch reads ATP. A helical membrane pass occupies residues 80–100; it reads MLSVHNLQWISTISCVALMFA. The Chloroplast intermembrane portion of the chain corresponds to 101–103; the sequence is RGT. A helical transmembrane segment spans residues 104–124; that stretch reads GIHKSFVVPLFALQAPMGIVS. At 125–129 the chain is on the stromal side; that stretch reads WMKGE. A helical membrane pass occupies residues 130–150; sequence YGIWAAFLALLTRLFFSFPVE. Over 151–152 the chain is Chloroplast intermembrane; it reads LE. Residues 153 to 173 traverse the membrane as a helical segment; the sequence is LPFIALLLVIVAPYQVMSIRG. Over 174–176 the chain is Stromal; it reads KQE. A helical transmembrane segment spans residues 177–197; it reads GAILSLAISCFLAFQHFSRAG. The Chloroplast intermembrane segment spans residues 198–205; it reads TLQKAFDQ. The chain crosses the membrane as a helical span at residues 206 to 226; that stretch reads NSVLATVAIIGVTVVSFLFLI.

It belongs to the Cold-regulated 413 protein family.

It is found in the plastid. It localises to the chloroplast inner membrane. This Arabidopsis thaliana (Mouse-ear cress) protein is Cold-regulated 413 inner membrane protein 2, chloroplastic (COR413IM2).